The chain runs to 69 residues: Large ribosomal subunit protein bL32c (69 aa).

It belongs to the bacterial ribosomal protein bL32 family.

It localises to the plastid. Its subcellular location is the chloroplast. The polypeptide is Large ribosomal subunit protein bL32c (Pelargonium hortorum (Common geranium)).